The chain runs to 337 residues: Glyceraldehyde-3-phosphate dehydrogenase (337 aa).

Residues 12–13, D34, and R79 each bind NAD(+); that span reads RI. Residues 150–152, T181, 210–211, and R233 contribute to the D-glyceraldehyde 3-phosphate site; these read SCT and TG. C151 (nucleophile) is an active-site residue. N315 is a binding site for NAD(+).

The protein belongs to the glyceraldehyde-3-phosphate dehydrogenase family. As to quaternary structure, homotetramer.

It is found in the cytoplasm. It carries out the reaction D-glyceraldehyde 3-phosphate + phosphate + NAD(+) = (2R)-3-phospho-glyceroyl phosphate + NADH + H(+). Its pathway is carbohydrate degradation; glycolysis; pyruvate from D-glyceraldehyde 3-phosphate: step 1/5. This Coccidioides immitis (strain RS) (Valley fever fungus) protein is Glyceraldehyde-3-phosphate dehydrogenase (GPD).